The sequence spans 227 residues: ATP phosphoribosyltransferase (227 aa).

Belongs to the ATP phosphoribosyltransferase family. Short subfamily. In terms of assembly, heteromultimer composed of HisG and HisZ subunits.

Its subcellular location is the cytoplasm. It catalyses the reaction 1-(5-phospho-beta-D-ribosyl)-ATP + diphosphate = 5-phospho-alpha-D-ribose 1-diphosphate + ATP. It functions in the pathway amino-acid biosynthesis; L-histidine biosynthesis; L-histidine from 5-phospho-alpha-D-ribose 1-diphosphate: step 1/9. In terms of biological role, catalyzes the condensation of ATP and 5-phosphoribose 1-diphosphate to form N'-(5'-phosphoribosyl)-ATP (PR-ATP). Has a crucial role in the pathway because the rate of histidine biosynthesis seems to be controlled primarily by regulation of HisG enzymatic activity. In Bordetella avium (strain 197N), this protein is ATP phosphoribosyltransferase.